The primary structure comprises 503 residues: Ribose import ATP-binding protein RbsA 1 (503 aa).

2 ABC transporter domains span residues 5–241 (IALE…VGRA) and 253–495 (IGQP…AGIE). ATP is bound at residue 37 to 44 (GENGAGKS).

The protein belongs to the ABC transporter superfamily. Ribose importer (TC 3.A.1.2.1) family. In terms of assembly, the complex is composed of an ATP-binding protein (RbsA), two transmembrane proteins (RbsC) and a solute-binding protein (RbsB).

It localises to the cell inner membrane. The enzyme catalyses D-ribose(out) + ATP + H2O = D-ribose(in) + ADP + phosphate + H(+). Part of the ABC transporter complex RbsABC involved in ribose import. Responsible for energy coupling to the transport system. The sequence is that of Ribose import ATP-binding protein RbsA 1 from Rhizobium meliloti (strain 1021) (Ensifer meliloti).